A 301-amino-acid chain; its full sequence is Ribosomal protein L11 methyltransferase (301 aa).

The S-adenosyl-L-methionine site is built by Thr146, Gly167, Asp189, and Asn234.

Belongs to the methyltransferase superfamily. PrmA family.

Its subcellular location is the cytoplasm. It carries out the reaction L-lysyl-[protein] + 3 S-adenosyl-L-methionine = N(6),N(6),N(6)-trimethyl-L-lysyl-[protein] + 3 S-adenosyl-L-homocysteine + 3 H(+). Methylates ribosomal protein L11. The sequence is that of Ribosomal protein L11 methyltransferase from Acinetobacter baumannii (strain AB307-0294).